The chain runs to 347 residues: tRNA N6-adenosine threonylcarbamoyltransferase (347 aa).

Fe cation contacts are provided by His111 and His115. Substrate contacts are provided by residues 133–137 (LASGG), Asp166, Gly179, and Asn278. Fe cation is bound at residue Asp306.

It belongs to the KAE1 / TsaD family. The cofactor is Fe(2+).

It localises to the cytoplasm. The enzyme catalyses L-threonylcarbamoyladenylate + adenosine(37) in tRNA = N(6)-L-threonylcarbamoyladenosine(37) in tRNA + AMP + H(+). Functionally, required for the formation of a threonylcarbamoyl group on adenosine at position 37 (t(6)A37) in tRNAs that read codons beginning with adenine. Is involved in the transfer of the threonylcarbamoyl moiety of threonylcarbamoyl-AMP (TC-AMP) to the N6 group of A37, together with TsaE and TsaB. TsaD likely plays a direct catalytic role in this reaction. This is tRNA N6-adenosine threonylcarbamoyltransferase from Paramagnetospirillum magneticum (strain ATCC 700264 / AMB-1) (Magnetospirillum magneticum).